A 184-amino-acid polypeptide reads, in one-letter code: Adenylate kinase 1 (184 aa).

Residue 11 to 16 (GAGKGT) participates in ATP binding. The interval 31-60 (STGDILRQAMKEQTPLGIKAQSYVDSGELV) is NMP. AMP is bound by residues threonine 32, arginine 37, 58–60 (ELV), 86–89 (GFPR), and glutamine 93. Positions 127–133 (SRGRKDD) are LID. Arginine 128 lines the ATP pocket. Residues arginine 130 and arginine 141 each contribute to the AMP site. Glutamine 169 provides a ligand contact to ATP.

This sequence belongs to the adenylate kinase family. As to quaternary structure, monomer.

Its subcellular location is the cytoplasm. It catalyses the reaction AMP + ATP = 2 ADP. Its pathway is purine metabolism; AMP biosynthesis via salvage pathway; AMP from ADP: step 1/1. Catalyzes the reversible transfer of the terminal phosphate group between ATP and AMP. Plays an important role in cellular energy homeostasis and in adenine nucleotide metabolism. The chain is Adenylate kinase 1 from Nostoc sp. (strain PCC 7120 / SAG 25.82 / UTEX 2576).